The sequence spans 364 residues: UDP-N-acetylglucosamine--N-acetylmuramyl-(pentapeptide) pyrophosphoryl-undecaprenol N-acetylglucosamine transferase (364 aa).

UDP-N-acetyl-alpha-D-glucosamine contacts are provided by residues 10 to 12, asparagine 128, arginine 170, serine 199, isoleucine 250, and glutamine 295; that span reads TGG.

Belongs to the glycosyltransferase 28 family. MurG subfamily.

The protein resides in the cell inner membrane. It catalyses the reaction di-trans,octa-cis-undecaprenyl diphospho-N-acetyl-alpha-D-muramoyl-L-alanyl-D-glutamyl-meso-2,6-diaminopimeloyl-D-alanyl-D-alanine + UDP-N-acetyl-alpha-D-glucosamine = di-trans,octa-cis-undecaprenyl diphospho-[N-acetyl-alpha-D-glucosaminyl-(1-&gt;4)]-N-acetyl-alpha-D-muramoyl-L-alanyl-D-glutamyl-meso-2,6-diaminopimeloyl-D-alanyl-D-alanine + UDP + H(+). The protein operates within cell wall biogenesis; peptidoglycan biosynthesis. In terms of biological role, cell wall formation. Catalyzes the transfer of a GlcNAc subunit on undecaprenyl-pyrophosphoryl-MurNAc-pentapeptide (lipid intermediate I) to form undecaprenyl-pyrophosphoryl-MurNAc-(pentapeptide)GlcNAc (lipid intermediate II). The chain is UDP-N-acetylglucosamine--N-acetylmuramyl-(pentapeptide) pyrophosphoryl-undecaprenol N-acetylglucosamine transferase from Chlorobaculum tepidum (strain ATCC 49652 / DSM 12025 / NBRC 103806 / TLS) (Chlorobium tepidum).